Consider the following 210-residue polypeptide: Redox-sensing transcriptional repressor Rex (210 aa).

Residues 16–55 (IYMRTLQELLEDDVDVISSERLAKQCGVNPAQIRKDLAYF) constitute a DNA-binding region (H-T-H motif). Residue 90-95 (GLGNLG) participates in NAD(+) binding.

This sequence belongs to the transcriptional regulatory Rex family. As to quaternary structure, homodimer.

The protein localises to the cytoplasm. In terms of biological role, modulates transcription in response to changes in cellular NADH/NAD(+) redox state. This is Redox-sensing transcriptional repressor Rex from Syntrophobacter fumaroxidans (strain DSM 10017 / MPOB).